The sequence spans 795 residues: Phenylalanine--tRNA ligase beta subunit (795 aa).

The tRNA-binding domain maps to 39 to 148; it reads KSEFHGVVVG…KETLVGINVY (110 aa). Residues 400 to 475 form the B5 domain; that stretch reads HKNNTIRLHH…RIYEYNNVHL (76 aa). Mg(2+) contacts are provided by Asp453, Asp459, and Asp463. The region spanning 701 to 794 is the FDX-ACB domain; sequence SKFPTVRRDI…LQKKFQAVLR (94 aa).

The protein belongs to the phenylalanyl-tRNA synthetase beta subunit family. Type 1 subfamily. As to quaternary structure, tetramer of two alpha and two beta subunits. Requires Mg(2+) as cofactor.

Its subcellular location is the cytoplasm. The catalysed reaction is tRNA(Phe) + L-phenylalanine + ATP = L-phenylalanyl-tRNA(Phe) + AMP + diphosphate + H(+). The protein is Phenylalanine--tRNA ligase beta subunit (pheT) of Buchnera aphidicola subsp. Acyrthosiphon pisum (strain APS) (Acyrthosiphon pisum symbiotic bacterium).